The primary structure comprises 304 residues: Aspartate carbamoyltransferase catalytic subunit (304 aa).

2 residues coordinate carbamoyl phosphate: arginine 57 and threonine 58. L-aspartate is bound at residue lysine 85. Carbamoyl phosphate contacts are provided by arginine 107, histidine 134, and glutamine 137. L-aspartate-binding residues include arginine 167 and arginine 216. Alanine 260 and proline 261 together coordinate carbamoyl phosphate.

It belongs to the aspartate/ornithine carbamoyltransferase superfamily. ATCase family. As to quaternary structure, heterododecamer (2C3:3R2) of six catalytic PyrB chains organized as two trimers (C3), and six regulatory PyrI chains organized as three dimers (R2).

The enzyme catalyses carbamoyl phosphate + L-aspartate = N-carbamoyl-L-aspartate + phosphate + H(+). It functions in the pathway pyrimidine metabolism; UMP biosynthesis via de novo pathway; (S)-dihydroorotate from bicarbonate: step 2/3. Its function is as follows. Catalyzes the condensation of carbamoyl phosphate and aspartate to form carbamoyl aspartate and inorganic phosphate, the committed step in the de novo pyrimidine nucleotide biosynthesis pathway. This Fusobacterium nucleatum subsp. nucleatum (strain ATCC 25586 / DSM 15643 / BCRC 10681 / CIP 101130 / JCM 8532 / KCTC 2640 / LMG 13131 / VPI 4355) protein is Aspartate carbamoyltransferase catalytic subunit.